Consider the following 416-residue polypeptide: MEKLYVEGNKILNGHVIISGSKNAALPILFMTILTEGKIKIGNIPNLTDINIALKLLVYLGVKITGNETLCIDASSINIFCPPYNLINKIRASIWMLGPLLARFGKAKIFLPGGCKIGSRPIDLHLNGLTQLGATINLKNNCIDAYVKGRLQGKYILMEKISVGATITIMSAATLAKGSTIIDNAACEPEIVDIAKFLNTLGADIIGAGSNKICIKGVLKLTGGTHQVIPDRIETGTFLVAAAASQGHITCHKTEPKHLTNVLMKLTEAGAKIKTGKDWIKLDMRGKRPKSLNICTAPYPGFPTDMQAQFALLNSISKGIGTITETIFENRFIYTSELIRMGAKIKIKNNTIICYGIPKLISSNVFSSDLRASATLILAGCIAAGITIVNHTYHLVRGYESFPKKLNKIGANIKII.

Residue 22 to 23 (KN) coordinates phosphoenolpyruvate. Arg-91 is a UDP-N-acetyl-alpha-D-glucosamine binding site. The active-site Proton donor is the Cys-115. Cys-115 is subject to 2-(S-cysteinyl)pyruvic acid O-phosphothioketal. Residues 120-124 (RPIDL), Asp-305, and Ile-327 contribute to the UDP-N-acetyl-alpha-D-glucosamine site.

It belongs to the EPSP synthase family. MurA subfamily.

Its subcellular location is the cytoplasm. The enzyme catalyses phosphoenolpyruvate + UDP-N-acetyl-alpha-D-glucosamine = UDP-N-acetyl-3-O-(1-carboxyvinyl)-alpha-D-glucosamine + phosphate. Its pathway is cell wall biogenesis; peptidoglycan biosynthesis. Cell wall formation. Adds enolpyruvyl to UDP-N-acetylglucosamine. The chain is UDP-N-acetylglucosamine 1-carboxyvinyltransferase from Buchnera aphidicola subsp. Acyrthosiphon pisum (strain APS) (Acyrthosiphon pisum symbiotic bacterium).